The sequence spans 213 residues: Large ribosomal subunit protein uL3 (213 aa).

Belongs to the universal ribosomal protein uL3 family. In terms of assembly, part of the 50S ribosomal subunit. Forms a cluster with proteins L14 and L19.

Its function is as follows. One of the primary rRNA binding proteins, it binds directly near the 3'-end of the 23S rRNA, where it nucleates assembly of the 50S subunit. This is Large ribosomal subunit protein uL3 from Desulforudis audaxviator (strain MP104C).